A 644-amino-acid chain; its full sequence is 1-deoxy-D-xylulose-5-phosphate synthase (644 aa).

Residues His-72 and 113 to 115 (GHA) each bind thiamine diphosphate. Residue Asp-144 participates in Mg(2+) binding. Thiamine diphosphate contacts are provided by residues 145–146 (GA), Asn-174, Tyr-287, and Glu-370. Asn-174 lines the Mg(2+) pocket.

This sequence belongs to the transketolase family. DXPS subfamily. Homodimer. Requires Mg(2+) as cofactor. Thiamine diphosphate serves as cofactor.

It carries out the reaction D-glyceraldehyde 3-phosphate + pyruvate + H(+) = 1-deoxy-D-xylulose 5-phosphate + CO2. It participates in metabolic intermediate biosynthesis; 1-deoxy-D-xylulose 5-phosphate biosynthesis; 1-deoxy-D-xylulose 5-phosphate from D-glyceraldehyde 3-phosphate and pyruvate: step 1/1. Functionally, catalyzes the acyloin condensation reaction between C atoms 2 and 3 of pyruvate and glyceraldehyde 3-phosphate to yield 1-deoxy-D-xylulose-5-phosphate (DXP). This chain is 1-deoxy-D-xylulose-5-phosphate synthase, found in Prochlorococcus marinus (strain MIT 9313).